Consider the following 191-residue polypeptide: Fe/S biogenesis protein NfuA (191 aa).

Cys-149 and Cys-152 together coordinate [4Fe-4S] cluster.

This sequence belongs to the NfuA family. Homodimer. [4Fe-4S] cluster is required as a cofactor.

In terms of biological role, involved in iron-sulfur cluster biogenesis. Binds a 4Fe-4S cluster, can transfer this cluster to apoproteins, and thereby intervenes in the maturation of Fe/S proteins. Could also act as a scaffold/chaperone for damaged Fe/S proteins. The polypeptide is Fe/S biogenesis protein NfuA (Salmonella arizonae (strain ATCC BAA-731 / CDC346-86 / RSK2980)).